We begin with the raw amino-acid sequence, 111 residues long: Ig kappa chain V-III region PC 7175 (111 aa).

The segment at 1–23 (DIVLTQSPASLAVSLGQRATISC) is framework-1. Residues cysteine 23 and cysteine 92 are joined by a disulfide bond. The interval 24–38 (RASKSVSTSGYSYMH) is complementarity-determining-1. The segment at 39 to 53 (WYQQKPGQPPKLLIY) is framework-2. Positions 54–60 (LASNLES) are complementarity-determining-2. The interval 61–92 (GVPARFSGSGSGTDFTLNIHPVEEEDAATYYC) is framework-3. Positions 93 to 101 (QHSRELPLT) are complementarity-determining-3. The segment at 102-111 (FGAGTKLELK) is framework-4.

The polypeptide is Ig kappa chain V-III region PC 7175 (Mus musculus (Mouse)).